The sequence spans 513 residues: 2-isopropylmalate synthase (513 aa).

The 264-residue stretch at 5–268 (LIIFDTTLRD…DVGVDTSQIV (264 aa)) folds into the Pyruvate carboxyltransferase domain. Residues Asp14, His202, His204, and Asn239 each contribute to the Mn(2+) site. Positions 394–513 (RFISLSQRSE…KAVQKINPQI (120 aa)) are regulatory domain.

It belongs to the alpha-IPM synthase/homocitrate synthase family. LeuA type 1 subfamily. As to quaternary structure, homodimer. It depends on Mn(2+) as a cofactor.

Its subcellular location is the cytoplasm. The catalysed reaction is 3-methyl-2-oxobutanoate + acetyl-CoA + H2O = (2S)-2-isopropylmalate + CoA + H(+). It functions in the pathway amino-acid biosynthesis; L-leucine biosynthesis; L-leucine from 3-methyl-2-oxobutanoate: step 1/4. Its function is as follows. Catalyzes the condensation of the acetyl group of acetyl-CoA with 3-methyl-2-oxobutanoate (2-ketoisovalerate) to form 3-carboxy-3-hydroxy-4-methylpentanoate (2-isopropylmalate). This Cupriavidus pinatubonensis (strain JMP 134 / LMG 1197) (Cupriavidus necator (strain JMP 134)) protein is 2-isopropylmalate synthase.